Consider the following 166-residue polypeptide: Large ribosomal subunit protein uL10 (166 aa).

The protein belongs to the universal ribosomal protein uL10 family. Part of the ribosomal stalk of the 50S ribosomal subunit. The N-terminus interacts with L11 and the large rRNA to form the base of the stalk. The C-terminus forms an elongated spine to which L12 dimers bind in a sequential fashion forming a multimeric L10(L12)X complex.

Forms part of the ribosomal stalk, playing a central role in the interaction of the ribosome with GTP-bound translation factors. This is Large ribosomal subunit protein uL10 from Pseudomonas paraeruginosa (strain DSM 24068 / PA7) (Pseudomonas aeruginosa (strain PA7)).